The sequence spans 172 residues: Adenine phosphoribosyltransferase (172 aa).

Belongs to the purine/pyrimidine phosphoribosyltransferase family. As to quaternary structure, homodimer.

It localises to the cytoplasm. It catalyses the reaction AMP + diphosphate = 5-phospho-alpha-D-ribose 1-diphosphate + adenine. It participates in purine metabolism; AMP biosynthesis via salvage pathway; AMP from adenine: step 1/1. Its function is as follows. Catalyzes a salvage reaction resulting in the formation of AMP, that is energically less costly than de novo synthesis. This Staphylococcus epidermidis (strain ATCC 35984 / DSM 28319 / BCRC 17069 / CCUG 31568 / BM 3577 / RP62A) protein is Adenine phosphoribosyltransferase.